We begin with the raw amino-acid sequence, 662 residues long: MTSKAVVFAYHDIGCTGIEALLNAGYEIAAVFTHADDPRENTFYASVARLCAERGIPLHAPEDVNHPLWLERIRQLRPDFLFSFYYRRLLGAELLACAARGAYNLHGSLLPRYRGRAPANWVLVNGETQTGVTLHRMIERADAGPILAQQAVAIDPEDTALSLHGKLRKAAGALLRDSLPLLALGVLPEVEQDESQASHFGRRTPADGLLDWHRPARQLYDLVRAVTQPYPGAFCQVGEQKLIVWSAEVVAGNHGREPGSVLSCDPLRIACGEDSLVLRFGQRGERGLYLAGTQLATELGLVEGARLRGAACSPQRRTRVLILGVNGFIGNHLSERLLRDGRYEVHGMDIGSDAIERLKADPHFHFVEGDIGIHSEWLEYHVKKCDVILPLVAIATPIEYTRNPLRVFELDFEENLRIVRYCVKYGKRVVFPSTSEVYGMCQDPDFDEDRSNLVVGPINKQRWIYSVSKQLLDRVIWAYGQQGLRFTLFRPFNWMGPRLDRLDSARIGSSRAITQLILHLVEGTPIRLVDGGAQKRCFTDVDDGIEALARIIDNRDGRCDGQIVNIGNPDNEASIRQLGEELLRQFEAHPLRAQFPPFAGFREVESRSFYGDGYQDVAHRKPSIDNARRLLDWQPTIELRETIGKTLDFFLHEALREREAQA.

Residues 1–307 (MTSKAVVFAY…ELGLVEGARL (307 aa)) are formyltransferase ArnAFT. Residue His106 is the Proton donor; for formyltransferase activity of the active site. (6R)-10-formyltetrahydrofolate contacts are provided by residues Arg116 and 138 to 142 (IERAD). Residues 316–662 (RRTRVLILGV…EALREREAQA (347 aa)) form a dehydrogenase ArnADH region. Residues Asp349 and 370–371 (DI) contribute to the NAD(+) site. UDP-alpha-D-glucuronate is bound by residues Ala395, Tyr400, and 434–435 (TS). Glu436 functions as the Proton acceptor; for decarboxylase activity in the catalytic mechanism. UDP-alpha-D-glucuronate-binding positions include Arg462, Asn493, 527 to 536 (RLVDGGAQKR), and Tyr614. Arg620 acts as the Proton donor; for decarboxylase activity in catalysis.

In the N-terminal section; belongs to the Fmt family. UDP-L-Ara4N formyltransferase subfamily. It in the C-terminal section; belongs to the NAD(P)-dependent epimerase/dehydratase family. UDP-glucuronic acid decarboxylase subfamily. Homohexamer, formed by a dimer of trimers.

It catalyses the reaction UDP-alpha-D-glucuronate + NAD(+) = UDP-beta-L-threo-pentopyranos-4-ulose + CO2 + NADH. The catalysed reaction is UDP-4-amino-4-deoxy-beta-L-arabinose + (6R)-10-formyltetrahydrofolate = UDP-4-deoxy-4-formamido-beta-L-arabinose + (6S)-5,6,7,8-tetrahydrofolate + H(+). Its pathway is nucleotide-sugar biosynthesis; UDP-4-deoxy-4-formamido-beta-L-arabinose biosynthesis; UDP-4-deoxy-4-formamido-beta-L-arabinose from UDP-alpha-D-glucuronate: step 1/3. The protein operates within nucleotide-sugar biosynthesis; UDP-4-deoxy-4-formamido-beta-L-arabinose biosynthesis; UDP-4-deoxy-4-formamido-beta-L-arabinose from UDP-alpha-D-glucuronate: step 3/3. It functions in the pathway bacterial outer membrane biogenesis; lipopolysaccharide biosynthesis. Functionally, bifunctional enzyme that catalyzes the oxidative decarboxylation of UDP-glucuronic acid (UDP-GlcUA) to UDP-4-keto-arabinose (UDP-Ara4O) and the addition of a formyl group to UDP-4-amino-4-deoxy-L-arabinose (UDP-L-Ara4N) to form UDP-L-4-formamido-arabinose (UDP-L-Ara4FN). The modified arabinose is attached to lipid A and is required for resistance to polymyxin and cationic antimicrobial peptides. This Pseudomonas aeruginosa (strain ATCC 15692 / DSM 22644 / CIP 104116 / JCM 14847 / LMG 12228 / 1C / PRS 101 / PAO1) protein is Bifunctional polymyxin resistance protein ArnA.